A 152-amino-acid polypeptide reads, in one-letter code: Superoxide dismutase [Cu-Zn] 2 (152 aa).

Cu cation-binding residues include His-45, His-47, and His-62. Cys-56 and Cys-145 form a disulfide bridge. His-62, His-70, His-79, and Asp-82 together coordinate Zn(2+). His-119 is a binding site for Cu cation.

This sequence belongs to the Cu-Zn superoxide dismutase family. Homodimer. The cofactor is Cu cation. Zn(2+) serves as cofactor.

It is found in the cytoplasm. It carries out the reaction 2 superoxide + 2 H(+) = H2O2 + O2. Destroys radicals which are normally produced within the cells and which are toxic to biological systems. The sequence is that of Superoxide dismutase [Cu-Zn] 2 (SODCC2) from Oryza sativa subsp. japonica (Rice).